Here is a 569-residue protein sequence, read N- to C-terminus: Protein germ cell-less (569 aa).

Positions 17-43 (SNRRKRKRSTDSSLGKDDPAQLDTTQP) are disordered. The region spanning 66–136 (SDVAVMALDK…MYSDEIEIES (71 aa)) is the BTB domain. Residues 517 to 553 (GANSDRPLSPSSADDSAVFIGDSEPSTPSSPAPRPRI) form a disordered region.

Its subcellular location is the cytoplasm. Functionally, required for the specification of pole cells and germ cell formation. Mothers with reduced glc function give rise to sterile adult progeny that lack germ cells. This Drosophila melanogaster (Fruit fly) protein is Protein germ cell-less (gcl).